A 192-amino-acid chain; its full sequence is dCTP deaminase, dUMP-forming (192 aa).

Residues 101-106, Asp-119, 127-129, Gln-148, Tyr-162, and Gln-174 each bind dCTP; these read KSSLGR and TLE. Glu-129 (proton donor/acceptor) is an active-site residue. The interval 171–192 is disordered; sequence YQGQRGPTPSRSWQSWHTWPTR.

It belongs to the dCTP deaminase family. Homotrimer.

It carries out the reaction dCTP + 2 H2O = dUMP + NH4(+) + diphosphate. It participates in pyrimidine metabolism; dUMP biosynthesis; dUMP from dCTP: step 1/1. In terms of biological role, bifunctional enzyme that catalyzes both the deamination of dCTP to dUTP and the hydrolysis of dUTP to dUMP without releasing the toxic dUTP intermediate. This chain is dCTP deaminase, dUMP-forming, found in Salinispora arenicola (strain CNS-205).